A 166-amino-acid polypeptide reads, in one-letter code: Small ribosomal subunit protein uS5 (166 aa).

An S5 DRBM domain is found at 11–74 (LQEKLIAVNR…EKARRNMINV (64 aa)).

The protein belongs to the universal ribosomal protein uS5 family. In terms of assembly, part of the 30S ribosomal subunit. Contacts proteins S4 and S8.

Functionally, with S4 and S12 plays an important role in translational accuracy. In terms of biological role, located at the back of the 30S subunit body where it stabilizes the conformation of the head with respect to the body. The protein is Small ribosomal subunit protein uS5 of Enterobacter sp. (strain 638).